The chain runs to 680 residues: Viral IRF2-like protein (680 aa).

Positions 7–103 (SEWLTDFIID…RPFTIYKGKM (97 aa)) form a DNA-binding region, IRF tryptophan pentad repeat. 4 disordered regions span residues 156-201 (SLRK…SENE), 220-257 (EEPEPSGFGSSGQSSSLLAPDSPRPSTSQVQGPLHVHT), 343-365 (ETASPQGPMQSEGGEEGSTESVS), and 403-423 (ASPQGPMQSEGGEEGSTESVS). The span at 168-188 (KQAAAVATPTTSSAAEVSSRS) shows a compositional bias: low complexity. The span at 191-200 (EDTESSDSEN) shows a compositional bias: acidic residues. Residues 220 to 240 (EEPEPSGFGSSGQSSSLLAPD) are compositionally biased toward low complexity.

It belongs to the IRF family. Interacts with host EIF2AK2/PKR. Interacts with host USP7.

It is found in the host nucleus. It localises to the host cytoplasm. Its function is as follows. DNA-binding transcription factor that plays a role in the modulation of host immune response. Acts by interacting with host EIF2AK2/PKR and inhibiting its activation. In turn, EIF2AK2/PKR substrates including EIF2S1 or histone H2A are not phosphorylated. Inhibits type I interferon signaling by targeting host IRF3 during viral reactivation from latency. Attenuates the transcriptional activity of host FOXO3 via activation of the AKT1 signaling pathway, inhibiting FOXO3-mediated apoptosis. Also suppresses the expression of viral early lytic genes in both newly infected and reactivated infected host cells allowing regulation of viral life cycle by harnessing the interferon pathway. Mechanistically, promotes host PML bodies formation as well as host antiviral restriction factors IFIT1-3 expression leading to inhibition of viral early lytic proteins. Also regulates host TRAF3 and TRAF6 ubiquitination by interacting with USP7 deubiquitinase thereby influencing TRAF3/6-mediated signal transduction. This chain is Viral IRF2-like protein (vIRF-2), found in Human herpesvirus 8 type P (isolate GK18) (HHV-8).